The chain runs to 239 residues: Ribose-5-phosphate isomerase A (239 aa).

Residues Ser40–Thr43, Asp96–Asp99, and Lys110–Gly113 contribute to the substrate site. The active-site Proton acceptor is Glu119. Lys137 is a binding site for substrate.

Belongs to the ribose 5-phosphate isomerase family. In terms of assembly, homodimer.

The catalysed reaction is aldehydo-D-ribose 5-phosphate = D-ribulose 5-phosphate. Its pathway is carbohydrate degradation; pentose phosphate pathway; D-ribose 5-phosphate from D-ribulose 5-phosphate (non-oxidative stage): step 1/1. Functionally, catalyzes the reversible conversion of ribose-5-phosphate to ribulose 5-phosphate. This Methanococcus vannielii (strain ATCC 35089 / DSM 1224 / JCM 13029 / OCM 148 / SB) protein is Ribose-5-phosphate isomerase A.